The chain runs to 180 residues: ATP synthase subunit delta (180 aa).

This sequence belongs to the ATPase delta chain family. As to quaternary structure, F-type ATPases have 2 components, F(1) - the catalytic core - and F(0) - the membrane proton channel. F(1) has five subunits: alpha(3), beta(3), gamma(1), delta(1), epsilon(1). F(0) has three main subunits: a(1), b(2) and c(10-14). The alpha and beta chains form an alternating ring which encloses part of the gamma chain. F(1) is attached to F(0) by a central stalk formed by the gamma and epsilon chains, while a peripheral stalk is formed by the delta and b chains.

It is found in the cell inner membrane. Functionally, f(1)F(0) ATP synthase produces ATP from ADP in the presence of a proton or sodium gradient. F-type ATPases consist of two structural domains, F(1) containing the extramembraneous catalytic core and F(0) containing the membrane proton channel, linked together by a central stalk and a peripheral stalk. During catalysis, ATP synthesis in the catalytic domain of F(1) is coupled via a rotary mechanism of the central stalk subunits to proton translocation. In terms of biological role, this protein is part of the stalk that links CF(0) to CF(1). It either transmits conformational changes from CF(0) to CF(1) or is implicated in proton conduction. In Parabacteroides distasonis (strain ATCC 8503 / DSM 20701 / CIP 104284 / JCM 5825 / NCTC 11152), this protein is ATP synthase subunit delta.